The chain runs to 71 residues: Phosphatidylinositol N-acetylglucosaminyltransferase subunit Y (71 aa).

Topologically, residues 1–5 are cytoplasmic; sequence MIRSL. The helical transmembrane segment at 6–26 threads the bilayer; that stretch reads PTMTVLIPLVSLAGLLYSASV. Topologically, residues 27–44 are lumenal; sequence EEGFPEGCTSASSLCFYS. A helical membrane pass occupies residues 45–65; that stretch reads LLLPVTVPVYVFFHLWTWMGL. Residues 66-71 are Cytoplasmic-facing; that stretch reads KLFRHN.

In terms of assembly, component of the glycosylphosphatidylinositol-N-acetylglucosaminyltransferase (GPI-GnT) complex composed at least by PIGA, PIGC, PIGH, PIGP, PIGQ, PIGY and DPM2. Interacts directly with PIGA; this interaction regulates glycosylphosphatidylinositol-N-acetylglucosaminyltransferase activity. Does not interact with Ras proteins.

Its subcellular location is the endoplasmic reticulum membrane. It participates in glycolipid biosynthesis; glycosylphosphatidylinositol-anchor biosynthesis. Its function is as follows. Part of the glycosylphosphatidylinositol-N-acetylglucosaminyltransferase (GPI-GnT) complex that catalyzes the transfer of N-acetylglucosamine from UDP-N-acetylglucosamine to phosphatidylinositol and participates in the first step of GPI biosynthesis. May act by regulating the catalytic subunit PIGA. In Mus musculus (Mouse), this protein is Phosphatidylinositol N-acetylglucosaminyltransferase subunit Y.